The primary structure comprises 308 residues: Serine/threonine-protein phosphatase 4 catalytic subunit (308 aa).

Residues Asp51, His53, Asp79, and Asn111 each contribute to the Mn(2+) site. The active-site Proton donor is the His112. The Mn(2+) site is built by His161 and His235.

This sequence belongs to the PPP phosphatase family. PP-4 (PP-X) subfamily. In terms of assembly, catalytic subunit of the histone H2A phosphatase complex (HTP-C) containing PPH3, PSY2 and PSY4. Inactivated in a complex with phosphatase methylesterase PPE1 (PP2Ai). Interacts with phosphatase 2A activator RRD1, which can reactivate PP2Ai by dissociating the catalytic subunit from the complex. Interacts with SPT5 and TAP42. Mn(2+) serves as cofactor. Reversibly methyl esterified on Leu-308 by leucine carboxyl methyltransferase 1 (PPM1) and protein phosphatase methylesterase 1 (PPE1). Carboxyl methylation influences the affinity of the catalytic subunit for the different regulatory subunits, thereby modulating the PP2A holoenzyme's substrate specificity, enzyme activity and cellular localization.

It is found in the cytoplasm. The protein localises to the nucleus. It catalyses the reaction O-phospho-L-seryl-[protein] + H2O = L-seryl-[protein] + phosphate. The catalysed reaction is O-phospho-L-threonyl-[protein] + H2O = L-threonyl-[protein] + phosphate. Functionally, forms the histone H2A phosphatase complex in association with the regulatory subunits PSY2 and PSY4, which dephosphorylates H2AS128ph (gamma-H2A) that has been displaced from sites of DNA lesions in the double-stranded DNA break repair process. Dephosphorylation is necessary for efficient recovery from the DNA damage checkpoint. PPH3 is directly involved in the dephosphorylation and activation of the transcription factor GLN3 in response to nutrient availability. The protein is Serine/threonine-protein phosphatase 4 catalytic subunit (PPH3) of Saccharomyces cerevisiae (strain ATCC 204508 / S288c) (Baker's yeast).